The sequence spans 58 residues: Attractin (58 aa).

3 disulfides stabilise this stretch: C4–C41, C13–C33, and C20–C26. N8 carries an N-linked (GlcNAc...) asparagine glycan.

As to expression, produced by the albumen gland of the egg cordons.

The protein resides in the secreted. Water-borne pheromone that attract the marine mollusk Aplysia into breeding aggregations and coordinate male and female reproductive behavior within the aggregation. This is Attractin (ATT) from Aplysia fasciata (Mottled sea hare).